The following is a 163-amino-acid chain: 3-isopropylmalate dehydratase small subunit (163 aa).

This sequence belongs to the LeuD family. LeuD type 2 subfamily. Heterodimer of LeuC and LeuD.

The enzyme catalyses (2R,3S)-3-isopropylmalate = (2S)-2-isopropylmalate. The protein operates within amino-acid biosynthesis; L-leucine biosynthesis; L-leucine from 3-methyl-2-oxobutanoate: step 2/4. Functionally, catalyzes the isomerization between 2-isopropylmalate and 3-isopropylmalate, via the formation of 2-isopropylmaleate. The protein is 3-isopropylmalate dehydratase small subunit of Ruminiclostridium cellulolyticum (strain ATCC 35319 / DSM 5812 / JCM 6584 / H10) (Clostridium cellulolyticum).